Reading from the N-terminus, the 62-residue chain is Ponericin-W-like 32.2 (62 aa).

An N-terminal signal peptide occupies residues 1–23 (MKCKKQLLVIFFAYFLVVNESEA). Positions 49-62 (RALMKRDLEDIMDP) are excised as a propeptide.

This sequence belongs to the non-disulfide-bridged peptide (NDBP) superfamily. Medium-length antimicrobial peptide (group 3) family. Ponericin-W subfamily. Expressed by the venom gland.

The protein localises to the secreted. It is found in the target cell membrane. Functionally, antimicrobial peptide with potent activity against a range of Gram-positive and Gram-negative bacteria. Has high hemolytic activity against erythrocytes. May act by disrupting the integrity of the bacterial cell membrane. The sequence is that of Ponericin-W-like 32.2 from Lychas mucronatus (Chinese swimming scorpion).